The sequence spans 245 residues: Uridylate kinase (245 aa).

12–15 (KLSG) serves as a coordination point for ATP. The tract at residues 20-25 (GERGVG) is involved in allosteric activation by GTP. G54 contributes to the UMP binding site. ATP is bound by residues G55 and R59. Residues D74 and 135–142 (IGSPYFST) each bind UMP. Positions 163, 169, and 172 each coordinate ATP.

This sequence belongs to the UMP kinase family. In terms of assembly, homohexamer.

It is found in the cytoplasm. It catalyses the reaction UMP + ATP = UDP + ADP. It functions in the pathway pyrimidine metabolism; CTP biosynthesis via de novo pathway; UDP from UMP (UMPK route): step 1/1. Its activity is regulated as follows. Allosterically activated by GTP. Inhibited by UTP. Its function is as follows. Catalyzes the reversible phosphorylation of UMP to UDP. The polypeptide is Uridylate kinase (Streptococcus pneumoniae serotype 2 (strain D39 / NCTC 7466)).